Reading from the N-terminus, the 433-residue chain is Probable beta-1,3-galactosyl-O-glycosyl-glycoprotein beta-1,6-N-acetylglucosaminyltransferase 7 (433 aa).

At 1–8 (MSQLRTTK) the chain is on the cytoplasmic side. A helical; Signal-anchor for type II membrane protein transmembrane segment spans residues 9–25 (AGLVACGMICAFIFLYL). The Extracellular portion of the chain corresponds to 26-433 (RNPGPEEAEA…QSHFNSQPHH (408 aa)). Cystine bridges form between Cys57-Cys209, Cys143-Cys358, Cys164-Cys191, and Cys367-Cys398. N-linked (GlcNAc...) asparagine glycosylation occurs at Asn112. The interval 233 to 275 (NITPGVTPPANSKPKTGQGPPKPSPDENSYTAPNTIFKQSPPH) is disordered. A compositionally biased stretch (polar residues) spans 258-275 (DENSYTAPNTIFKQSPPH). Positions 413-433 (VPPEPHWQFPQQSHFNSQPHH) are disordered. Positions 421 to 433 (FPQQSHFNSQPHH) are enriched in polar residues.

Belongs to the glycosyltransferase 14 family.

Its subcellular location is the golgi apparatus membrane. Its pathway is protein modification; protein glycosylation. In terms of biological role, probable glycosyltransferase. This chain is Probable beta-1,3-galactosyl-O-glycosyl-glycoprotein beta-1,6-N-acetylglucosaminyltransferase 7, found in Mus musculus (Mouse).